The chain runs to 1097 residues: DNA-directed RNA polymerase subunit beta (1097 aa).

Residues 1072–1097 (QDVNPRRSTPSRPTYESLGVADYDED) form a disordered region.

The protein belongs to the RNA polymerase beta chain family. As to quaternary structure, in cyanobacteria the RNAP catalytic core is composed of 2 alpha, 1 beta, 1 beta', 1 gamma and 1 omega subunit. When a sigma factor is associated with the core the holoenzyme is formed, which can initiate transcription.

The catalysed reaction is RNA(n) + a ribonucleoside 5'-triphosphate = RNA(n+1) + diphosphate. Functionally, DNA-dependent RNA polymerase catalyzes the transcription of DNA into RNA using the four ribonucleoside triphosphates as substrates. The protein is DNA-directed RNA polymerase subunit beta of Parasynechococcus marenigrum (strain WH8102).